The following is a 247-amino-acid chain: Carboxy-S-adenosyl-L-methionine synthase (247 aa).

Residues tyrosine 39, 64–66 (GCS), 89–90 (DN), 117–118 (DI), asparagine 132, and arginine 199 contribute to the S-adenosyl-L-methionine site.

The protein belongs to the class I-like SAM-binding methyltransferase superfamily. Cx-SAM synthase family. In terms of assembly, homodimer.

The catalysed reaction is prephenate + S-adenosyl-L-methionine = carboxy-S-adenosyl-L-methionine + 3-phenylpyruvate + H2O. Functionally, catalyzes the conversion of S-adenosyl-L-methionine (SAM) to carboxy-S-adenosyl-L-methionine (Cx-SAM). The polypeptide is Carboxy-S-adenosyl-L-methionine synthase (Pectobacterium atrosepticum (strain SCRI 1043 / ATCC BAA-672) (Erwinia carotovora subsp. atroseptica)).